The chain runs to 306 residues: Dihydroorotate dehydrogenase B (NAD(+)), catalytic subunit (306 aa).

FMN contacts are provided by residues S22 and 46–47 (KT). Residues K46, 70–74 (NSIGL), and N128 each bind substrate. N128 serves as a coordination point for FMN. C131 (nucleophile) is an active-site residue. An FMN-binding site is contributed by K164. 191–192 (NT) is a binding site for substrate. FMN contacts are provided by residues G216, 242–243 (GG), and 264–265 (GS).

This sequence belongs to the dihydroorotate dehydrogenase family. Type 1 subfamily. In terms of assembly, heterotetramer of 2 PyrK and 2 PyrD type B subunits. FMN is required as a cofactor.

It is found in the cytoplasm. The enzyme catalyses (S)-dihydroorotate + NAD(+) = orotate + NADH + H(+). Its pathway is pyrimidine metabolism; UMP biosynthesis via de novo pathway; orotate from (S)-dihydroorotate (NAD(+) route): step 1/1. Its function is as follows. Catalyzes the conversion of dihydroorotate to orotate with NAD(+) as electron acceptor. The chain is Dihydroorotate dehydrogenase B (NAD(+)), catalytic subunit (pyrD) from Endomicrobium trichonymphae.